The chain runs to 245 residues: 1-(5-phosphoribosyl)-5-[(5-phosphoribosylamino)methylideneamino] imidazole-4-carboxamide isomerase (245 aa).

Residue Asp8 is the Proton acceptor of the active site. The Proton donor role is filled by Asp129.

This sequence belongs to the HisA/HisF family.

It localises to the cytoplasm. It carries out the reaction 1-(5-phospho-beta-D-ribosyl)-5-[(5-phospho-beta-D-ribosylamino)methylideneamino]imidazole-4-carboxamide = 5-[(5-phospho-1-deoxy-D-ribulos-1-ylimino)methylamino]-1-(5-phospho-beta-D-ribosyl)imidazole-4-carboxamide. It participates in amino-acid biosynthesis; L-histidine biosynthesis; L-histidine from 5-phospho-alpha-D-ribose 1-diphosphate: step 4/9. The sequence is that of 1-(5-phosphoribosyl)-5-[(5-phosphoribosylamino)methylideneamino] imidazole-4-carboxamide isomerase from Sinorhizobium fredii (strain NBRC 101917 / NGR234).